The sequence spans 327 residues: Glycerol-3-phosphate dehydrogenase [NAD(P)+] (327 aa).

Residues Phe-14, Arg-35, and Lys-108 each contribute to the NADPH site. Sn-glycerol 3-phosphate-binding residues include Lys-108 and Gly-136. Ala-140 is an NADPH binding site. Positions 191, 244, 254, 255, and 256 each coordinate sn-glycerol 3-phosphate. Residue Lys-191 is the Proton acceptor of the active site. Residue Arg-255 coordinates NADPH. 2 residues coordinate NADPH: Leu-275 and Glu-277.

The protein belongs to the NAD-dependent glycerol-3-phosphate dehydrogenase family.

It is found in the cytoplasm. It catalyses the reaction sn-glycerol 3-phosphate + NAD(+) = dihydroxyacetone phosphate + NADH + H(+). It carries out the reaction sn-glycerol 3-phosphate + NADP(+) = dihydroxyacetone phosphate + NADPH + H(+). Its pathway is membrane lipid metabolism; glycerophospholipid metabolism. Its function is as follows. Catalyzes the reduction of the glycolytic intermediate dihydroxyacetone phosphate (DHAP) to sn-glycerol 3-phosphate (G3P), the key precursor for phospholipid synthesis. The protein is Glycerol-3-phosphate dehydrogenase [NAD(P)+] of Agrobacterium fabrum (strain C58 / ATCC 33970) (Agrobacterium tumefaciens (strain C58)).